We begin with the raw amino-acid sequence, 688 residues long: Polyphosphate kinase (688 aa).

Asn45 lines the ATP pocket. Mg(2+) is bound by residues Arg375 and Arg405. Residues Pro430–Thr464 form the PLD phosphodiesterase domain. Residue His435 is the Phosphohistidine intermediate of the active site. Tyr468, Arg564, and His592 together coordinate ATP.

This sequence belongs to the polyphosphate kinase 1 (PPK1) family. Mg(2+) serves as cofactor. In terms of processing, an intermediate of this reaction is the autophosphorylated ppk in which a phosphate is covalently linked to a histidine residue through a N-P bond.

The catalysed reaction is [phosphate](n) + ATP = [phosphate](n+1) + ADP. Its function is as follows. Catalyzes the reversible transfer of the terminal phosphate of ATP to form a long-chain polyphosphate (polyP). This Salmonella typhimurium (strain LT2 / SGSC1412 / ATCC 700720) protein is Polyphosphate kinase.